The following is a 124-amino-acid chain: Small ribosomal subunit protein uS12 (124 aa).

3-methylthioaspartic acid is present on D89.

It belongs to the universal ribosomal protein uS12 family. As to quaternary structure, part of the 30S ribosomal subunit. Contacts proteins S8 and S17. May interact with IF1 in the 30S initiation complex.

Functionally, with S4 and S5 plays an important role in translational accuracy. In terms of biological role, interacts with and stabilizes bases of the 16S rRNA that are involved in tRNA selection in the A site and with the mRNA backbone. Located at the interface of the 30S and 50S subunits, it traverses the body of the 30S subunit contacting proteins on the other side and probably holding the rRNA structure together. The combined cluster of proteins S8, S12 and S17 appears to hold together the shoulder and platform of the 30S subunit. This Histophilus somni (strain 129Pt) (Haemophilus somnus) protein is Small ribosomal subunit protein uS12.